We begin with the raw amino-acid sequence, 150 residues long: UPF0756 membrane protein NTHI1233 (150 aa).

The next 4 helical transmembrane spans lie at 1–21 (MTLQLNTIALLLVILLILGVL), 52–72 (YGVKIGIIILTIGVLSPLVSG), 81–101 (GFLSWKMALSIAVGVLVAWLA), and 123–143 (IIGVAFLGGIPVGPLIAAGIL).

The protein belongs to the UPF0756 family.

The protein localises to the cell membrane. The chain is UPF0756 membrane protein NTHI1233 from Haemophilus influenzae (strain 86-028NP).